Reading from the N-terminus, the 994-residue chain is Protein translocase subunit SecA (994 aa).

ATP is bound by residues Gln-85, 103-107 (GEGKT), and Asp-492. Positions 868 to 888 (IPDGAGPVADAQPVRPAAARQ) are enriched in low complexity. Positions 868–994 (IPDGAGPVAD…HGDPARRNTE (127 aa)) are disordered. Pro residues predominate over residues 889–900 (TPPPPSPVPSAP). Residues Cys-973, Cys-975, Cys-984, and His-985 each contribute to the Zn(2+) site. Over residues 984 to 994 (CHGDPARRNTE) the composition is skewed to basic and acidic residues.

It belongs to the SecA family. As to quaternary structure, monomer and homodimer. Part of the essential Sec protein translocation apparatus which comprises SecA, SecYEG and auxiliary proteins SecDF. Other proteins may also be involved. The cofactor is Zn(2+).

The protein resides in the cell membrane. It localises to the cytoplasm. It catalyses the reaction ATP + H2O + cellular proteinSide 1 = ADP + phosphate + cellular proteinSide 2.. Its function is as follows. Part of the Sec protein translocase complex. Interacts with the SecYEG preprotein conducting channel. Has a central role in coupling the hydrolysis of ATP to the transfer of proteins into and across the cell membrane, serving as an ATP-driven molecular motor driving the stepwise translocation of polypeptide chains across the membrane. This is Protein translocase subunit SecA from Frankia casuarinae (strain DSM 45818 / CECT 9043 / HFP020203 / CcI3).